We begin with the raw amino-acid sequence, 171 residues long: Putative adenylate kinase (171 aa).

Residues Gly9, Gly11, Lys12, Thr13, and Thr14 each coordinate ATP. Residues 28 to 51 are NMP; the sequence is SLGELIRQKGFVLGRDPIRGYLEA. Residues 99–109 are LID; it reads GRGYPEGKVLE. An ATP-binding site is contributed by Arg100.

The protein belongs to the adenylate kinase family. AK6 subfamily. In terms of assembly, interacts with uS11. Not a structural component of 40S pre-ribosomes, but transiently interacts with them by binding to uS11.

The enzyme catalyses AMP + ATP = 2 ADP. The catalysed reaction is ATP + H2O = ADP + phosphate + H(+). Its function is as follows. Broad-specificity nucleoside monophosphate (NMP) kinase that catalyzes the reversible transfer of the terminal phosphate group between nucleoside triphosphates and monophosphates. Also has ATPase activity. Involved in the late maturation steps of the 30S ribosomal particles, specifically 16S rRNA maturation. While NMP activity is not required for ribosome maturation, ATPase activity is. Associates transiently with small ribosomal subunit protein uS11. ATP hydrolysis breaks the interaction with uS11. May temporarily remove uS11 from the ribosome to enable a conformational change of the ribosomal RNA that is needed for the final maturation step of the small ribosomal subunit. The chain is Putative adenylate kinase from Methanothermobacter thermautotrophicus (strain ATCC 29096 / DSM 1053 / JCM 10044 / NBRC 100330 / Delta H) (Methanobacterium thermoautotrophicum).